Here is a 351-residue protein sequence, read N- to C-terminus: uncharacterized protein (351 aa).

Mn(2+)-binding residues include Asp215, Asp226, His290, Glu319, and Glu333.

It belongs to the peptidase M24B family. The cofactor is Mn(2+).

This is an uncharacterized protein from Staphylococcus aureus (strain bovine RF122 / ET3-1).